A 589-amino-acid polypeptide reads, in one-letter code: C-type lectin domain family 4 member F (589 aa).

Residues 1 to 39 (MDGEAVRFCTDNQCVSLHPQEVDSVAMAPAAPKIPRLVQ) lie on the Cytoplasmic side of the membrane. Residues 40–60 (ATPAFMAVTLVFSLVTLFVVV) traverse the membrane as a helical; Signal-anchor for type II membrane protein segment. The Extracellular portion of the chain corresponds to 61–589 (QQQTRPVPKP…TPPCPWILSN (529 aa)). Asn-79, Asn-113, Asn-207, Asn-230, Asn-244, Asn-312, Asn-385, and Asn-399 each carry an N-linked (GlcNAc...) asparagine glycan. One can recognise a C-type lectin domain in the interval 476-589 (NGGSLYYFSS…TPPCPWILSN (114 aa)).

Its subcellular location is the membrane. Receptor with an affinity for galactose and fucose. Could be involved in endocytosis. In Homo sapiens (Human), this protein is C-type lectin domain family 4 member F (CLEC4F).